Here is a 38-residue protein sequence, read N- to C-terminus: Large ribosomal subunit protein bL36 (38 aa).

It belongs to the bacterial ribosomal protein bL36 family.

The sequence is that of Large ribosomal subunit protein bL36 from Cellvibrio japonicus (strain Ueda107) (Pseudomonas fluorescens subsp. cellulosa).